A 241-amino-acid polypeptide reads, in one-letter code: Probable transcriptional regulatory protein LMOf2365_1554 (241 aa).

A compositionally biased stretch (polar residues) spans 1-14; that stretch reads MSGHSKWNNIQGRK. The disordered stretch occupies residues 1–22; it reads MSGHSKWNNIQGRKNAQDSKRS.

Belongs to the TACO1 family.

The protein resides in the cytoplasm. This is Probable transcriptional regulatory protein LMOf2365_1554 from Listeria monocytogenes serotype 4b (strain F2365).